The chain runs to 221 residues: Ribonuclease T (221 aa).

Residues 20–196 enclose the Exonuclease domain; the sequence is VVVDLETGGF…YDTERTAELF (177 aa). Residues Asp23, Glu25, His183, and Asp188 each coordinate Mg(2+). The active-site Proton donor/acceptor is the His183.

The protein belongs to the RNase T family. Homodimer. Requires Mg(2+) as cofactor.

Trims short 3' overhangs of a variety of RNA species, leaving a one or two nucleotide 3' overhang. Responsible for the end-turnover of tRNA: specifically removes the terminal AMP residue from uncharged tRNA (tRNA-C-C-A). Also appears to be involved in tRNA biosynthesis. The chain is Ribonuclease T from Chromohalobacter salexigens (strain ATCC BAA-138 / DSM 3043 / CIP 106854 / NCIMB 13768 / 1H11).